The chain runs to 365 residues: Aminomethyltransferase (365 aa).

It belongs to the GcvT family. The glycine cleavage system is composed of four proteins: P, T, L and H.

The enzyme catalyses N(6)-[(R)-S(8)-aminomethyldihydrolipoyl]-L-lysyl-[protein] + (6S)-5,6,7,8-tetrahydrofolate = N(6)-[(R)-dihydrolipoyl]-L-lysyl-[protein] + (6R)-5,10-methylene-5,6,7,8-tetrahydrofolate + NH4(+). The glycine cleavage system catalyzes the degradation of glycine. This is Aminomethyltransferase from Chlorobium luteolum (strain DSM 273 / BCRC 81028 / 2530) (Pelodictyon luteolum).